A 260-amino-acid chain; its full sequence is Methanethiol S-methyltransferase (260 aa).

The next 5 helical transmembrane spans lie at 27 to 47, 55 to 75, 107 to 127, 134 to 154, and 196 to 216; these read CYLFFLLTALYLIGFLAGIGV, PGITWPLAVLVDAILITLFAA, CLVLALLFVLWQPIATPVWNV, GLLIALFWLGWGIVLLATFLI, and FLIAFWATPDMTAGHLLFAIL.

This sequence belongs to the nurim family.

It is found in the membrane. The catalysed reaction is methanethiol + S-adenosyl-L-methionine = dimethyl sulfide + S-adenosyl-L-homocysteine + H(+). In terms of biological role, catalyzes the methylation of methanethiol (MeSH) to yield dimethylsulphide (DMS). The polypeptide is Methanethiol S-methyltransferase (Pseudomonas sp. (strain GM41(2012))).